Reading from the N-terminus, the 283-residue chain is Pantoate--beta-alanine ligase (283 aa).

This sequence belongs to the pantothenate synthetase family.

It catalyses the reaction (R)-pantoate + beta-alanine + ATP = (R)-pantothenate + AMP + diphosphate + H(+). It functions in the pathway cofactor biosynthesis; (R)-pantothenate biosynthesis; (R)-pantothenate from (R)-pantoate and beta-alanine: step 1/1. This chain is Pantoate--beta-alanine ligase (pan6), found in Schizosaccharomyces pombe (strain 972 / ATCC 24843) (Fission yeast).